Here is a 510-residue protein sequence, read N- to C-terminus: MFTRVKSAVVSFMGGIMAGSSGLEHVNGSDLPVRFSYTRPEFLGLSPDEIECSADHIARPILILKETQRLPWSTGYAEVINAGKSTHNEDQASCEVVFVKKKSGVQSTPNKNSSSKRRSSLPNAEGLQLKDNQEVDGITFHYWALFDGHAGAGAAVVASKLLHHHIAEQIPDIIDILKNSAVLPPTCLGEEPESTSSNSRTLTRAASLRGGSGAPGSPSTPPTRFFTEKKIPHECLVIGALENAFKEMDLRIERERSTYSISGGCTALIVVYLLGKLYVANAGDSRAIIIRNGEIIPMSSEFTPETERQRLQYLAFLQPHLLGNEFTHLEFPRRVQRKEVGKMMLYRDFNMTGWAYKTIEENDLKFPLIYGEGKKARVMATIGVTRGLGDHDLKVHDSNIYIKPFLSSVPEVRVYDLVQHEHSADDVLVLATDGLWDVLFNEEVLEAVTSFLANCDPDDPHRYTLAAQDLVMRARGVLKDRGWRISNDRLGSGDDISVYVIPLEHGNRVS.

The PPM-type phosphatase domain maps to S73 to L503. Disordered regions lie at residues V105–Q128 and L188–F225.

It belongs to the PP2C family.

Its subcellular location is the nucleus. The protein resides in the cytoplasm. The enzyme catalyses O-phospho-L-seryl-[protein] + H2O = L-seryl-[protein] + phosphate. It carries out the reaction O-phospho-L-threonyl-[protein] + H2O = L-threonyl-[protein] + phosphate. The chain is Protein phosphatase 1H (ppm1h) from Xenopus tropicalis (Western clawed frog).